We begin with the raw amino-acid sequence, 436 residues long: EPS I polysaccharide export inner membrane protein EpsE (436 aa).

12 helical membrane passes run 20–40, 49–69, 91–111, 133–153, 160–180, 185–205, 234–254, 261–281, 307–327, 341–361, 375–395, and 396–416; these read VLGL…NILL, FGLF…LATG, LCAF…ALYL, AAIV…QYAM, ATIS…MGPI, LALT…LLVL, VLTT…LAAM, LALF…PATL, ALLF…LLAG, AASS…SVLL, FAMA…ALRL, and GFGA…LILF.

The protein to E.coli bicyclomycin resistance protein (BCR).

It localises to the cell inner membrane. Functionally, probably involved in polymerization and/or export of exopolysaccharide EPS I which functions as a virulence factor. May play a role in export of EPS I or its intermediates across the membranes. This chain is EPS I polysaccharide export inner membrane protein EpsE (epsE), found in Ralstonia solanacearum (Pseudomonas solanacearum).